The following is a 493-amino-acid chain: Trigger factor (493 aa).

In terms of domain architecture, PPIase FKBP-type spans 162-243; sequence GDFVSLDLSA…VRGVKEKELP (82 aa). The tract at residues 432-493 is disordered; it reads ELALPARPAP…AAVDSGDRDI (62 aa). Residues 449–470 are compositionally biased toward basic and acidic residues; it reads HAGHDHEGHDHADHAGHDHAGD. The span at 474–485 shows a compositional bias: low complexity; that stretch reads AEPAEAPAATAA.

It belongs to the FKBP-type PPIase family. Tig subfamily.

It localises to the cytoplasm. It carries out the reaction [protein]-peptidylproline (omega=180) = [protein]-peptidylproline (omega=0). Functionally, involved in protein export. Acts as a chaperone by maintaining the newly synthesized protein in an open conformation. Functions as a peptidyl-prolyl cis-trans isomerase. This chain is Trigger factor, found in Frankia alni (strain DSM 45986 / CECT 9034 / ACN14a).